Reading from the N-terminus, the 215-residue chain is UPF0502 protein Shew_1617 (215 aa).

This sequence belongs to the UPF0502 family.

The polypeptide is UPF0502 protein Shew_1617 (Shewanella loihica (strain ATCC BAA-1088 / PV-4)).